The following is a 184-amino-acid chain: Signal peptidase I S (184 aa).

Residues 1–18 (MKSENVSKKKSILEWAKA) are Cytoplasmic-facing. Residues 19–39 (IVIAVVLALLIRNFIFAPYVV) form a helical membrane-spanning segment. The Extracellular portion of the chain corresponds to 40-184 (DGDSMYPTLH…YPFNEMRKTN (145 aa)). Catalysis depends on residues S43 and K83.

The protein belongs to the peptidase S26 family.

It localises to the cell membrane. It catalyses the reaction Cleavage of hydrophobic, N-terminal signal or leader sequences from secreted and periplasmic proteins.. Functionally, not essential for cell viability, but required for efficient secretion of many proteins. This is Signal peptidase I S (sipS) from Bacillus subtilis (strain 168).